Here is a 567-residue protein sequence, read N- to C-terminus: Urease subunit alpha (567 aa).

One can recognise a Urease domain in the interval 129–567; that stretch reads GGIDTHIHFI…LPMAQRYFLF (439 aa). Positions 134, 136, and 217 each coordinate Ni(2+). An N6-carboxylysine modification is found at lysine 217. Histidine 219 serves as a coordination point for substrate. 2 residues coordinate Ni(2+): histidine 246 and histidine 272. The Proton donor role is filled by histidine 320. Aspartate 360 provides a ligand contact to Ni(2+).

Belongs to the metallo-dependent hydrolases superfamily. Urease alpha subunit family. As to quaternary structure, probable heterotrimer of UreA (gamma), UreB (beta) and UreC (alpha) subunits. Three heterotrimers associate to form the active enzyme. The trimeric urease interacts with an accessory complex composed of UreD, UreF and UreG, which is required for the assembly of the nickel containing metallocenter of UreC. The UreE protein may also play a direct role in nickel transfer to the urease apoprotein. Ni cation is required as a cofactor. Carboxylation allows a single lysine to coordinate two nickel ions.

It localises to the cytoplasm. The enzyme catalyses urea + 2 H2O + H(+) = hydrogencarbonate + 2 NH4(+). It participates in nitrogen metabolism; urea degradation; CO(2) and NH(3) from urea (urease route): step 1/1. The sequence is that of Urease subunit alpha from Proteus mirabilis (strain HI4320).